The primary structure comprises 350 residues: Ferredoxin--NADP reductase (350 aa).

T14, D33, Q41, Y46, A86, F121, D286, and T327 together coordinate FAD.

Belongs to the ferredoxin--NADP reductase type 2 family. Homodimer. The cofactor is FAD.

It carries out the reaction 2 reduced [2Fe-2S]-[ferredoxin] + NADP(+) + H(+) = 2 oxidized [2Fe-2S]-[ferredoxin] + NADPH. This Flavobacterium johnsoniae (strain ATCC 17061 / DSM 2064 / JCM 8514 / BCRC 14874 / CCUG 350202 / NBRC 14942 / NCIMB 11054 / UW101) (Cytophaga johnsonae) protein is Ferredoxin--NADP reductase.